The sequence spans 378 residues: Tafazzin (378 aa).

Residues 1 to 137 are Mitochondrial intermembrane-facing; sequence MFMVVCSNLR…RLRNPSKFWY (137 aa). Residues 46-112 are disordered; sequence APEARPVPDE…DQDADPSLDV (67 aa). Basic and acidic residues predominate over residues 51 to 67; the sequence is PVPDERYPGSQQDRKDI. The stretch at 138–158 is an intramembrane region; it reads VVSQFVVSAVGIFSKVVLMFL. Topologically, residues 159-378 are mitochondrial intermembrane; that stretch reads NKPRVYNRER…ETEKLHRERN (220 aa). The HXXXXD motif signature appears at 188 to 193; it reads HYSCFD.

It belongs to the taffazin family. As to quaternary structure, associates with multiple protein complexes. Association with large protein complexes occurs only in the presence of cardiolipin.

It is found in the mitochondrion outer membrane. Its subcellular location is the mitochondrion inner membrane. The protein resides in the mitochondrion. It localises to the mitochondrion membrane. The protein localises to the golgi apparatus membrane. It is found in the endoplasmic reticulum membrane. It catalyses the reaction 1'-[1,2-diacyl-sn-glycero-3-phospho],3'-[1-acyl-sn-glycero-3-phospho]-glycerol + a 1,2-diacyl-sn-glycero-3-phosphocholine = a cardiolipin + a 1-acyl-sn-glycero-3-phosphocholine. The enzyme catalyses 1'-[1,2-di-(9Z,12Z-octadecadienoyl)-sn-glycero-3-phospho]-3'-[1-(9Z,12Z-octadecadienoyl)-sn-glycero-3-phospho]-glycerol + 1-hexadecanoyl-2-(9Z,12Z-octadecadienoyl)-sn-glycero-3-phosphocholine = 1',3'-bis-[1,2-di-(9Z,12Z-octadecadienoyl)-sn-glycero-3-phospho]-glycerol + 1-hexadecanoyl-sn-glycero-3-phosphocholine. It carries out the reaction 1'-[1,2-di-(9Z,12Z-octadecadienoyl)-sn-glycero-3-phospho]-3'-[2-(9Z,12Z-octadecadienoyl)-sn-glycero-3-phospho]-glycerol + 1-hexadecanoyl-2-(9Z,12Z-octadecadienoyl)-sn-glycero-3-phosphocholine = 1',3'-bis-[1,2-di-(9Z,12Z-octadecadienoyl)-sn-glycero-3-phospho]-glycerol + 1-hexadecanoyl-sn-glycero-3-phosphocholine. The catalysed reaction is 1,2-di-(9Z,12Z-octadecadienoyl)-sn-glycero-3-phosphocholine + 1'-[1,2-di-(9Z,12Z-octadecadienoyl)-sn-glycero-3-phospho]-3'-[1-(9Z,12Z-octadecadienoyl)-sn-glycero-3-phospho]-glycerol = 1-(9Z,12Z)-octadecadienoyl-sn-glycero-3-phosphocholine + 1',3'-bis-[1,2-di-(9Z,12Z-octadecadienoyl)-sn-glycero-3-phospho]-glycerol. It catalyses the reaction 1-tetradecanoyl-sn-glycero-3-phosphocholine + 1',3'-bis-[1,2-di-(9Z,12Z-octadecadienoyl)-sn-glycero-3-phospho]-glycerol = 1-tetradecanoyl-2-(9Z,12Z-octadecadienoyl)-sn-glycero-3-phosphocholine + 1'-[1,2-di-(9Z,12Z-octadecadienoyl)-sn-glycero-3-phospho]-3'-[1-(9Z,12Z-octadecadienoyl)-sn-glycero-3-phospho]-glycerol. The enzyme catalyses 1',3'-bis[1,2-di-(9Z-octadecenoyl)-sn-glycero-3-phospho]-glycerol + 1-nonadecanoyl-sn-glycero-3-phosphocholine = 1-nonadecanoyl-2-(9Z-octadecenoyl)-sn-glycero-3-phosphocholine + 1'-[1,2-di-(9Z-octadecenoyl)-sn-glycero-3-phospho]-3'-[1-(9Z-octadecenoyl)-sn-glycero-3-phospho]-glycerol. It carries out the reaction a 1,2-diacyl-sn-glycero-3-phospho-(1'-sn-glycerol) + a 1-acyl-sn-glycero-3-phosphocholine = 1-acyl-sn-glycero-3-phospho-(1'-sn-glycerol) + a 1,2-diacyl-sn-glycero-3-phosphocholine. The catalysed reaction is 1-hexadecanoyl-2-(9Z,12Z-octadecadienoyl)-sn-glycero-3-phospho-(1'-sn-glycerol) + 1-hexadecanoyl-sn-glycero-3-phosphocholine = 1-hexadecanoyl-sn-glycero-3-phospho-(1'-sn-glycerol) + 1-hexadecanoyl-2-(9Z,12Z-octadecadienoyl)-sn-glycero-3-phosphocholine. It catalyses the reaction 1,2-di-(9Z-octadecenoyl)-sn-glycero-3-phospho-(1'-sn-glycerol) + 1-nonadecanoyl-sn-glycero-3-phosphocholine = 1-nonadecanoyl-2-(9Z-octadecenoyl)-sn-glycero-3-phosphocholine + 1-(9Z-octadecenoyl)-sn-glycero-3-phospho-(1'-sn-glycerol). The enzyme catalyses a 1,2-diacyl-sn-glycero-3-phosphate + a 1-acyl-sn-glycero-3-phosphocholine = a 1-acyl-sn-glycero-3-phosphate + a 1,2-diacyl-sn-glycero-3-phosphocholine. It carries out the reaction 1-hexadecanoyl-2-(9Z,12Z-octadecadienoyl)-sn-glycero-3-phosphate + 1-hexadecanoyl-sn-glycero-3-phosphocholine = 1-hexadecanoyl-2-(9Z,12Z-octadecadienoyl)-sn-glycero-3-phosphocholine + 1-hexadecanoyl-sn-glycero-3-phosphate. The catalysed reaction is 1-hexadecanoyl-2-(9Z,12Z-octadecadienoyl)-sn-glycero-3-phosphocholine + 1-(9Z-octadecenoyl)-sn-glycero-3-phosphate = 1-(9Z)-octadecenoyl-2-(9Z,12Z)-octadecadienoyl-sn-glycero-3-phosphate + 1-hexadecanoyl-sn-glycero-3-phosphocholine. It catalyses the reaction a 1-acyl-sn-glycero-3-phosphocholine + a 1,2-diacyl-sn-glycero-3-phosphoethanolamine = a 1-acyl-sn-glycero-3-phosphoethanolamine + a 1,2-diacyl-sn-glycero-3-phosphocholine. The enzyme catalyses 1-hexadecanoyl-2-(9Z,12Z-octadecadienoyl)-sn-glycero-3-phosphoethanolamine + 1-hexadecanoyl-sn-glycero-3-phosphocholine = 1-hexadecanoyl-2-(9Z,12Z-octadecadienoyl)-sn-glycero-3-phosphocholine + 1-hexadecanoyl-sn-glycero-3-phosphoethanolamine. It carries out the reaction 1,2-di-(9Z,12Z-octadecadienoyl)-sn-glycero-3-phosphoethanolamine + 1-tetradecanoyl-sn-glycero-3-phosphocholine = 1-(9Z,12Z-octadecadienoyl)-sn-glycero-3-phosphoethanolamine + 1-tetradecanoyl-2-(9Z,12Z-octadecadienoyl)-sn-glycero-3-phosphocholine. The catalysed reaction is 1'-[1,2-diacyl-sn-glycero-3-phospho],3'-[1-acyl-sn-glycero-3-phospho]-glycerol + a 1,2-diacyl-sn-glycero-3-phosphoethanolamine = a cardiolipin + a 1-acyl-sn-glycero-3-phosphoethanolamine. It catalyses the reaction 1-hexadecanoyl-2-(9Z,12Z-octadecadienoyl)-sn-glycero-3-phosphoethanolamine + 1'-[1,2-di-(9Z,12Z-octadecadienoyl)-sn-glycero-3-phospho]-3'-[1-(9Z,12Z-octadecadienoyl)-sn-glycero-3-phospho]-glycerol = 1',3'-bis-[1,2-di-(9Z,12Z-octadecadienoyl)-sn-glycero-3-phospho]-glycerol + 1-hexadecanoyl-sn-glycero-3-phosphoethanolamine. The enzyme catalyses 1'-[1-(9Z,12Z-octadecadienoyl)-2-(9Z-octadecenoyl)-sn-glycero-3-phospho]-3'-[1-(9Z,12Z-octadecadienoyl)-sn-glycero-3-phospho]-glycerol + 1',3'-bis-[1,2-di-(9Z,12Z-octadecadienoyl)-sn-glycero-3-phospho]-glycerol = 1'-[1,2-di-(9Z,12Z-octadecadienoyl)-sn-glycero-3-phospho]-3'-[1-(9Z,12Z-octadecadienoyl)-2-(9Z-octadecenoyl)-sn-glycero-3-phospho]-glycerol + 1'-[1,2-di-(9Z,12Z-octadecadienoyl)-sn-glycero-3-phospho]-3'-[1-(9Z,12Z-octadecadienoyl)-sn-glycero-3-phospho]-glycerol. It carries out the reaction 1,2-di-(9Z-hexadecenoyl)-sn-glycero-3-phosphocholine + 1-hexadecanoyl-sn-glycero-3-phosphocholine = 1-hexadecanoyl-2-(9Z-hexadecenoyl)-sn-glycero-3-phosphocholine + 1-(9Z-hexadecenoyl)-sn-glycero-3-phosphocholine. The catalysed reaction is 1,2-dioctadecanoyl-sn-glycero-3-phosphocholine + 1-hexadecanoyl-sn-glycero-3-phosphocholine = 1-hexadecanoyl-2-octadecanoyl-sn-glycero-3-phosphocholine + 1-octadecanoyl-sn-glycero-3-phosphocholine. It catalyses the reaction 1,2-di-(9Z-octadecenoyl)-sn-glycero-3-phosphocholine + 1-hexadecanoyl-sn-glycero-3-phosphocholine = 1-hexadecanoyl-2-(9Z-octadecenoyl)-sn-glycero-3-phosphocholine + 1-(9Z-octadecenoyl)-sn-glycero-3-phosphocholine. The enzyme catalyses 1,2-di-(9Z,12Z-octadecadienoyl)-sn-glycero-3-phosphocholine + 1-(9Z-octadecenoyl)-sn-glycero-3-phosphocholine = 1-(9Z)-octadecenoyl-2-(9Z,12Z)-octadecadienoyl-sn-glycero-3-phosphocholine + 1-(9Z,12Z)-octadecadienoyl-sn-glycero-3-phosphocholine. It carries out the reaction 1,2-di-(9Z,12Z,15Z-octadecatrienoyl)-sn-glycero-3-phosphocholine + 1-tetradecanoyl-sn-glycero-3-phosphocholine = 1-tetradecanoyl-2-(9Z,12Z,15Z-octadecatrienoyl)-sn-glycero-3-phosphocholine + 1-(9Z,12Z,15Z-octadecatrienoyl)-sn-glycero-3-phosphocholine. The catalysed reaction is 1-nonadecanoyl-sn-glycero-3-phosphocholine + 1-octadecanoyl-2-(9Z-octadecenoyl)-sn-glycero-3-phosphocholine = 1-nonadecanoyl-2-(9Z-octadecenoyl)-sn-glycero-3-phosphocholine + 1-octadecanoyl-sn-glycero-3-phosphocholine. It catalyses the reaction 1-(9Z)-octadecenoyl-2-octadecanoyl-sn-glycero-3-phosphocholine + 1-nonadecanoyl-sn-glycero-3-phosphocholine = 2-octadecanoyl-sn-glycero-3-phosphocholine + 1-nonadecanoyl-2-(9Z-octadecenoyl)-sn-glycero-3-phosphocholine. It functions in the pathway phospholipid metabolism. In terms of biological role, acyltransferase required to remodel newly synthesized phospholipid cardiolipin (1',3'-bis-[1,2-diacyl-sn-glycero-3-phospho]-glycerol or CL), a key component of the mitochondrial inner membrane, with tissue specific acyl chains necessary for adequate mitochondrial function. Its role in cellular physiology is to improve mitochondrial performance. CL is critical for the coassembly of lipids and proteins in mitochondrial membranes. For instance, remodeling of the acyl groups of CL in the mitochondrial inner membrane affects the assembly and stability of respiratory chain complex IV and its supercomplex forms. Catalyzes the transacylation between phospholipids and lysophospholipids, with the highest rate being between phosphatidylcholine (1,2-diacyl-sn-glycero-3-phosphocholine or PC) and CL. Catalyzes both 1-acyl-sn-glycero-3-phosphocholine (lysophosphatidylcholine or LPC) reacylation and PC-CL transacylation, that means, it exchanges acyl groups between CL and PC by a combination of forward and reverse transacylations. Also catalyzes transacylations between other phospholipids such as phosphatidylethanolamine (1,2-diacyl-sn-glycero-3-phosphoethanolamine or PE) and CL, between PC and PE, and between PC and phosphatidate (1,2-diacyl-sn-glycero-3-phosphate or PA), although at lower rate. Not regiospecific, it transfers acyl groups into any of the sn-1 and sn-2 positions of the monolysocardiolipin (MLCL), which is an important prerequisite for uniformity and symmetry in CL acyl distribution. Cannot transacylate dilysocardiolipin (DLCL), thus, the role of MLCL is limited to that of an acyl acceptor. CoA-independent, it can reshuffle molecular species within a single phospholipid class. Redistributes fatty acids between MLCL, CL, and other lipids, which prolongs the half-life of CL. Its action is completely reversible, which allows for cyclic changes, such as fission and fusion or bending and flattening of the membrane. Hence, by contributing to the flexibility of the lipid composition, it plays an important role in the dynamics of mitochondria membranes. Essential for the final stage of spermatogenesis, spermatid individualization. Required for the initiation of mitophagy. The chain is Tafazzin from Drosophila melanogaster (Fruit fly).